An 857-amino-acid polypeptide reads, in one-letter code: DNA mismatch repair protein MutS (857 aa).

621–628 lines the ATP pocket; the sequence is GPNMGGKS.

The protein belongs to the DNA mismatch repair MutS family.

Functionally, this protein is involved in the repair of mismatches in DNA. It is possible that it carries out the mismatch recognition step. This protein has a weak ATPase activity. The chain is DNA mismatch repair protein MutS from Francisella tularensis subsp. tularensis (strain SCHU S4 / Schu 4).